Reading from the N-terminus, the 28-residue chain is Ranatuerin-2AVb (28 aa).

A disulfide bridge links cysteine 23 with cysteine 28.

As to expression, expressed by the skin glands.

The protein resides in the secreted. Functionally, has antibacterial activity. The polypeptide is Ranatuerin-2AVb (Rana arvalis (Moor frog)).